A 139-amino-acid chain; its full sequence is Large ribosomal subunit protein bL17 (139 aa).

This sequence belongs to the bacterial ribosomal protein bL17 family. In terms of assembly, part of the 50S ribosomal subunit. Contacts protein L32.

The polypeptide is Large ribosomal subunit protein bL17 (Myxococcus xanthus (strain DK1622)).